A 278-amino-acid polypeptide reads, in one-letter code: Proteolipid protein DM beta (278 aa).

The next 4 membrane-spanning stretches (helical) occupy residues 30-46 (LIAT…FCGC), 84-100 (VIYG…ILLM), 130-146 (FIML…GVTA), and 213-229 (LFIV…IAMV).

Belongs to the myelin proteolipid protein family.

Its subcellular location is the membrane. The polypeptide is Proteolipid protein DM beta (Squalus acanthias (Spiny dogfish)).